The chain runs to 79 residues: Sec-independent protein translocase protein TatA (79 aa).

Residues 1–21 traverse the membrane as a helical segment; that stretch reads MGSLSIWHWIVVIAVVLLLFG. Over residues 42–60 the composition is skewed to basic and acidic residues; sequence GLQDDEKTAEKPDAVKSLD. The segment at 42–79 is disordered; it reads GLQDDEKTAEKPDAVKSLDHNATTGTPPNRTDVGSKAV. Polar residues predominate over residues 61-70; it reads HNATTGTPPN.

It belongs to the TatA/E family. The Tat system comprises two distinct complexes: a TatABC complex, containing multiple copies of TatA, TatB and TatC subunits, and a separate TatA complex, containing only TatA subunits. Substrates initially bind to the TatABC complex, which probably triggers association of the separate TatA complex to form the active translocon.

It is found in the cell inner membrane. Part of the twin-arginine translocation (Tat) system that transports large folded proteins containing a characteristic twin-arginine motif in their signal peptide across membranes. TatA could form the protein-conducting channel of the Tat system. The protein is Sec-independent protein translocase protein TatA of Rhodopseudomonas palustris (strain HaA2).